A 353-amino-acid chain; its full sequence is Polyprenal reductase 2 (353 aa).

6 consecutive transmembrane segments (helical) span residues proline 11–isoleucine 31, phenylalanine 78–phenylalanine 98, methionine 175–alanine 195, proline 234–leucine 254, tyrosine 291–glutamate 308, and tryptophan 313–leucine 335.

The protein belongs to the steroid 5-alpha reductase family. Polyprenal reductase subfamily.

The protein localises to the cell membrane. The enzyme catalyses a di-trans,poly-cis-dolichal + NADP(+) = a di-trans,poly-cis-polyprenal + NADPH + H(+). The protein operates within protein modification; protein glycosylation. In terms of biological role, plays a key role in early steps of protein N-linked glycosylation by being involved in the conversion of polyprenol into dolichol. Acts as a polyprenal reductase that mediates the reduction of polyprenal into dolichal in a NADP-dependent mechanism. Dolichols are required for the synthesis of dolichol-linked monosaccharides and the oligosaccharide precursor used for N-glycosylation. The sequence is that of Polyprenal reductase 2 from Oryza sativa subsp. indica (Rice).